An 81-amino-acid polypeptide reads, in one-letter code: uncharacterized protein (81 aa).

2 helical membrane-spanning segments follow: residues Ala27–Thr47 and Ile54–Met74.

Its subcellular location is the cell membrane. This is an uncharacterized protein from Bacillus subtilis (strain 168).